We begin with the raw amino-acid sequence, 489 residues long: ATP synthase subunit beta, chloroplastic (489 aa).

170-177 (GGAGVGKT) serves as a coordination point for ATP.

This sequence belongs to the ATPase alpha/beta chains family. As to quaternary structure, F-type ATPases have 2 components, CF(1) - the catalytic core - and CF(0) - the membrane proton channel. CF(1) has five subunits: alpha(3), beta(3), gamma(1), delta(1), epsilon(1). CF(0) has four main subunits: a(1), b(1), b'(1) and c(9-12).

Its subcellular location is the plastid. It is found in the chloroplast thylakoid membrane. It catalyses the reaction ATP + H2O + 4 H(+)(in) = ADP + phosphate + 5 H(+)(out). Produces ATP from ADP in the presence of a proton gradient across the membrane. The catalytic sites are hosted primarily by the beta subunits. This is ATP synthase subunit beta, chloroplastic from Zygnema circumcarinatum (Green alga).